The following is a 699-amino-acid chain: Elongation factor G (699 aa).

In terms of domain architecture, tr-type G spans 10–292 (DRTRNIGIMA…AVIDYLPSPT (283 aa)). GTP-binding positions include 19–26 (AHIDAGKT), 90–94 (DTPGH), and 144–147 (NKMD).

It belongs to the TRAFAC class translation factor GTPase superfamily. Classic translation factor GTPase family. EF-G/EF-2 subfamily.

It is found in the cytoplasm. In terms of biological role, catalyzes the GTP-dependent ribosomal translocation step during translation elongation. During this step, the ribosome changes from the pre-translocational (PRE) to the post-translocational (POST) state as the newly formed A-site-bound peptidyl-tRNA and P-site-bound deacylated tRNA move to the P and E sites, respectively. Catalyzes the coordinated movement of the two tRNA molecules, the mRNA and conformational changes in the ribosome. The polypeptide is Elongation factor G (Coxiella burnetii (strain Dugway 5J108-111)).